A 583-amino-acid chain; its full sequence is Ribosomal lysine N-methyltransferase 1 (583 aa).

An SET domain is found at 22 to 274 (EELKFLYTDL…QSRELSNNYG (253 aa)). S-adenosyl-L-methionine is bound at residue Y273. Coiled-coil stretches lie at residues 378 to 407 (KAEE…KLNS) and 433 to 459 (KGQK…ENKH).

Belongs to the class V-like SAM-binding methyltransferase superfamily. RKM1 family.

It localises to the cytoplasm. It is found in the nucleus. Its function is as follows. S-adenosyl-L-methionine-dependent protein-lysine N-methyltransferase that monomethylates ribosomal protein S18 (RPS18A and RPS18B) at 'Lys-48' and dimethylates ribosomal protein L23 (RPL23A and RPL23B) at 'Lys-106' and 'Lys-110'. This chain is Ribosomal lysine N-methyltransferase 1, found in Saccharomyces cerevisiae (strain ATCC 204508 / S288c) (Baker's yeast).